A 162-amino-acid polypeptide reads, in one-letter code: Small ribosomal subunit protein bS16 (162 aa).

The disordered stretch occupies residues 113–162 (ADGGPTTEATKPKKKSPAKKAAKAAEPAPQPEQPDTPALGGEQAELTAES). The span at 124 to 134 (PKKKSPAKKAA) shows a compositional bias: basic residues.

It belongs to the bacterial ribosomal protein bS16 family.

This Mycobacterium tuberculosis (strain ATCC 25177 / H37Ra) protein is Small ribosomal subunit protein bS16.